The sequence spans 427 residues: Sensor histidine kinase ArsS (427 aa).

Transmembrane regions (helical) follow at residues 3-23 (FSIF…FGAF) and 131-151 (NYFL…LFVL). The HAMP domain maps to 151–203 (LQSLLPLRELRSQVKPFAQGDKSVSCKSKQKDEIGDLANEFDNCILKINAMNE). A Histidine kinase domain is found at 211–398 (SIMHELRTPI…LSYHYSNGRI (188 aa)). H214 bears the Phosphohistidine; by autocatalysis mark.

Autophosphorylated.

The protein localises to the membrane. It carries out the reaction ATP + protein L-histidine = ADP + protein N-phospho-L-histidine.. In terms of biological role, member of the two-component regulatory system ArsS/ArsR that regulates genes involved in biofilm formation and acid adaptation by acting on major ammonia-producing pathways. Functions as a sensor protein kinase which is autophosphorylated at a histidine residue and transfers its phosphate group to the conserved aspartic acid residue in the regulatory domain of ArsR. In turn, ArsR binds to the upstream promoter regions of target genes including ureA, amiE and amiF to positively regulate their expression in response to acidic pH. Also participates in acidic acclimatation in a phosphorylation-independent pathway by regulating acid-induced trafficking of urease and its accessory proteins to the inner membrane. The protein is Sensor histidine kinase ArsS of Helicobacter pylori (strain ATCC 700392 / 26695) (Campylobacter pylori).